The chain runs to 97 residues: Aspartyl/glutamyl-tRNA(Asn/Gln) amidotransferase subunit C (97 aa).

This sequence belongs to the GatC family. As to quaternary structure, heterotrimer of A, B and C subunits.

The catalysed reaction is L-glutamyl-tRNA(Gln) + L-glutamine + ATP + H2O = L-glutaminyl-tRNA(Gln) + L-glutamate + ADP + phosphate + H(+). The enzyme catalyses L-aspartyl-tRNA(Asn) + L-glutamine + ATP + H2O = L-asparaginyl-tRNA(Asn) + L-glutamate + ADP + phosphate + 2 H(+). In terms of biological role, allows the formation of correctly charged Asn-tRNA(Asn) or Gln-tRNA(Gln) through the transamidation of misacylated Asp-tRNA(Asn) or Glu-tRNA(Gln) in organisms which lack either or both of asparaginyl-tRNA or glutaminyl-tRNA synthetases. The reaction takes place in the presence of glutamine and ATP through an activated phospho-Asp-tRNA(Asn) or phospho-Glu-tRNA(Gln). This is Aspartyl/glutamyl-tRNA(Asn/Gln) amidotransferase subunit C from Anaeromyxobacter sp. (strain K).